The primary structure comprises 287 residues: 3-beta-hydroxysteroid sulfotransferase (287 aa).

Position 44–49 (44–49) interacts with 3'-phosphoadenylyl sulfate; that stretch reads KSGTNW. 2 residues coordinate substrate: tryptophan 72 and tryptophan 77. Catalysis depends on histidine 99, which acts as the Proton acceptor. 3'-phosphoadenylyl sulfate is bound by residues arginine 121, serine 129, tyrosine 184, 218 to 223, and 247 to 249; these read SSFKFM and RKG.

This sequence belongs to the sulfotransferase 1 family. Homodimer. Liver, intestine and kidney.

It localises to the cytoplasm. It catalyses the reaction an alcohol + 3'-phosphoadenylyl sulfate = an alkyl sulfate + adenosine 3',5'-bisphosphate + H(+). In terms of biological role, sulfotransferase that utilizes 3'-phospho-5'-adenylyl sulfate (PAPS) as sulfonate donor to catalyze the sulfonation of 3-beta-hydroxyl groups of neutral steroids. High preference for C21 steroid (pregnenolone). The polypeptide is 3-beta-hydroxysteroid sulfotransferase (STD2) (Cavia porcellus (Guinea pig)).